A 203-amino-acid polypeptide reads, in one-letter code: Holliday junction branch migration complex subunit RuvA (203 aa).

A domain I region spans residues 1 to 63 (MIGQLSGKVD…EEHIHLYGFL (63 aa)). A domain II region spans residues 64–142 (NLEEKIFFNL…KISSGSAIIK (79 aa)). Residues 143–149 (ESLNIKH) are flexible linker. Residues 150-203 (ITPVASNEVIKALVNLGFSRFEAQNAVQGIITQNPEISIDELIKTALKNRNSNF) are domain III.

Belongs to the RuvA family. In terms of assembly, homotetramer. Forms an RuvA(8)-RuvB(12)-Holliday junction (HJ) complex. HJ DNA is sandwiched between 2 RuvA tetramers; dsDNA enters through RuvA and exits via RuvB. An RuvB hexamer assembles on each DNA strand where it exits the tetramer. Each RuvB hexamer is contacted by two RuvA subunits (via domain III) on 2 adjacent RuvB subunits; this complex drives branch migration. In the full resolvosome a probable DNA-RuvA(4)-RuvB(12)-RuvC(2) complex forms which resolves the HJ.

The protein resides in the cytoplasm. Functionally, the RuvA-RuvB-RuvC complex processes Holliday junction (HJ) DNA during genetic recombination and DNA repair, while the RuvA-RuvB complex plays an important role in the rescue of blocked DNA replication forks via replication fork reversal (RFR). RuvA specifically binds to HJ cruciform DNA, conferring on it an open structure. The RuvB hexamer acts as an ATP-dependent pump, pulling dsDNA into and through the RuvAB complex. HJ branch migration allows RuvC to scan DNA until it finds its consensus sequence, where it cleaves and resolves the cruciform DNA. This is Holliday junction branch migration complex subunit RuvA from Rickettsia africae (strain ESF-5).